The following is a 330-amino-acid chain: tRNA uridine(34) hydroxylase (330 aa).

In terms of domain architecture, Rhodanese spans 123-217; sequence SDPEVILVDT…YLEEVKQEES (95 aa). The active-site Cysteine persulfide intermediate is the Cys177.

The protein belongs to the TrhO family.

The catalysed reaction is uridine(34) in tRNA + AH2 + O2 = 5-hydroxyuridine(34) in tRNA + A + H2O. Functionally, catalyzes oxygen-dependent 5-hydroxyuridine (ho5U) modification at position 34 in tRNAs. This is tRNA uridine(34) hydroxylase from Shewanella sp. (strain ANA-3).